A 492-amino-acid chain; its full sequence is Ketol-acid reductoisomerase (NADP(+)) (492 aa).

The 195-residue stretch at 14–208 (LDQLGRCRFM…GGHKAGVLES (195 aa)) folds into the KARI N-terminal Rossmann domain. Residues 45 to 48 (CGAQ), Arg68, Arg76, Ser78, and 108 to 110 (DKQ) contribute to the NADP(+) site. Residue His132 is part of the active site. Gly158 contributes to the NADP(+) binding site. KARI C-terminal knotted domains lie at 209-344 (SFVA…NAPK) and 345-485 (YDGK…MTDM). Residues Asp217, Glu221, Glu389, and Glu393 each contribute to the Mg(2+) site. Position 414 (Ser414) interacts with substrate.

Belongs to the ketol-acid reductoisomerase family. It depends on Mg(2+) as a cofactor.

It catalyses the reaction (2R)-2,3-dihydroxy-3-methylbutanoate + NADP(+) = (2S)-2-acetolactate + NADPH + H(+). It carries out the reaction (2R,3R)-2,3-dihydroxy-3-methylpentanoate + NADP(+) = (S)-2-ethyl-2-hydroxy-3-oxobutanoate + NADPH + H(+). It participates in amino-acid biosynthesis; L-isoleucine biosynthesis; L-isoleucine from 2-oxobutanoate: step 2/4. It functions in the pathway amino-acid biosynthesis; L-valine biosynthesis; L-valine from pyruvate: step 2/4. In terms of biological role, involved in the biosynthesis of branched-chain amino acids (BCAA). Catalyzes an alkyl-migration followed by a ketol-acid reduction of (S)-2-acetolactate (S2AL) to yield (R)-2,3-dihydroxy-isovalerate. In the isomerase reaction, S2AL is rearranged via a Mg-dependent methyl migration to produce 3-hydroxy-3-methyl-2-ketobutyrate (HMKB). In the reductase reaction, this 2-ketoacid undergoes a metal-dependent reduction by NADPH to yield (R)-2,3-dihydroxy-isovalerate. This Haemophilus influenzae (strain PittGG) protein is Ketol-acid reductoisomerase (NADP(+)).